The primary structure comprises 330 residues: T-cell surface glycoprotein CD1b4 (330 aa).

The signal sequence occupies residues M1–T15. At Q16–G299 the chain is on the extracellular side. N-linked (GlcNAc...) asparagine glycosylation is found at N35, N72, and N143. 2 cysteine pairs are disulfide-bonded: C117/C181 and C221/C276. The region spanning P182–W292 is the Ig-like domain. A helical membrane pass occupies residues W300–F320. Residues Y321–F330 lie on the Cytoplasmic side of the membrane. The Internalization signal motif lies at Y326–I329.

Heterodimer with B2M (beta-2-microglobulin). Interacts with saposin C.

The protein localises to the cell membrane. Its subcellular location is the endosome membrane. It is found in the lysosome membrane. Antigen-presenting protein that binds self and non-self lipid and glycolipid antigens and presents them to T-cell receptors on natural killer T-cells. This chain is T-cell surface glycoprotein CD1b4 (CD1B4), found in Cavia porcellus (Guinea pig).